The following is a 499-amino-acid chain: Cytochrome P450 77A1 (499 aa).

Residue C443 participates in heme binding.

Belongs to the cytochrome P450 family. It depends on heme as a cofactor.

The sequence is that of Cytochrome P450 77A1 (CYP77A1) from Solanum melongena (Eggplant).